A 244-amino-acid polypeptide reads, in one-letter code: Type III pantothenate kinase (244 aa).

11–18 lines the ATP pocket; that stretch reads DAGNTSIK. Residues tyrosine 90 and 97-100 each bind substrate; that span reads GIDR. The Proton acceptor role is filled by aspartate 99. Aspartate 119 contributes to the K(+) binding site. Threonine 122 contacts ATP. Residue threonine 175 coordinates substrate.

It belongs to the type III pantothenate kinase family. As to quaternary structure, homodimer. NH4(+) serves as cofactor. It depends on K(+) as a cofactor.

The protein resides in the cytoplasm. The catalysed reaction is (R)-pantothenate + ATP = (R)-4'-phosphopantothenate + ADP + H(+). It functions in the pathway cofactor biosynthesis; coenzyme A biosynthesis; CoA from (R)-pantothenate: step 1/5. In terms of biological role, catalyzes the phosphorylation of pantothenate (Pan), the first step in CoA biosynthesis. This Marinomonas sp. (strain MWYL1) protein is Type III pantothenate kinase.